The sequence spans 1439 residues: Fanconi anemia group D2 protein (1439 aa).

A Glycyl lysine isopeptide (Lys-Gly) (interchain with G-Cter in ubiquitin) cross-link involves residue K563.

It belongs to the Fanconi anemia protein FANCD2 family. Homodimer; cannot be ubiquitinated and does not bind DNA. Part of a FANCI-FANCD2 heterodimeric complex that binds and scans dsDNA for DNA damage. Interacts directly with FANCE and FANCI. Interacts with USP1 and MEN1. The ubiquitinated form specifically interacts with BRCA1 and BLM. Both the nonubiquitinated and the monoubiquitinated forms interact with BRCA2; this interaction is mediated by phosphorylated FANCG and the complex also includes XCCR3. The ubiquitinated form specifically interacts with MTMR15/FAN1 (via UBZ-type zinc finger), leading to recruit MTMR15/FAN1 to sites of DNA damage. Interacts with DCLRE1B/Apollo. Interacts with POLN. Interacts with UHRF1 and UHRF2; these interactions promote FANCD2 activation. Post-translationally, monoubiquitinated on Lys-563 during S phase and upon genotoxic stress. Deubiquitinated by USP1 as cells enter G2/M, or once DNA repair is completed. Monoubiquitination prevents DNA release from the FANCI-FANCD2 complex. FANCD2 is only ubiquitinated in the FANCI-FANCD2 complex and the monoubiquitination of FANCD2 is promoted by phosphorylation of FANCI. Phosphorylated in response to various genotoxic stresses by ATM and/or ATR.

The protein localises to the nucleus. Required for maintenance of chromosomal stability. Promotes accurate and efficient pairing of homologs during meiosis. Involved in the repair of DNA double-strand breaks, both by homologous recombination and single-strand annealing. The FANCI-FANCD2 complex binds and scans double-stranded DNA (dsDNA) for DNA damage; this complex stalls at DNA junctions between double-stranded DNA and single-stranded DNA. May participate in S phase and G2 phase checkpoint activation upon DNA damage. Plays a role in preventing breakage and loss of missegregating chromatin at the end of cell division, particularly after replication stress. Required for the targeting, or stabilization, of BLM to non-centromeric abnormal structures induced by replicative stress. Promotes BRCA2/FANCD1 loading onto damaged chromatin. May also be involved in B-cell immunoglobulin isotype switching. This is Fanconi anemia group D2 protein from Gallus gallus (Chicken).